A 142-amino-acid polypeptide reads, in one-letter code: Translation initiation factor 2 subunit beta (142 aa).

It belongs to the eIF-2-beta/eIF-5 family. Heterotrimer composed of an alpha, a beta and a gamma chain.

In terms of biological role, eIF-2 functions in the early steps of protein synthesis by forming a ternary complex with GTP and initiator tRNA. This is Translation initiation factor 2 subunit beta from Methanosphaera stadtmanae (strain ATCC 43021 / DSM 3091 / JCM 11832 / MCB-3).